Reading from the N-terminus, the 122-residue chain is Small ribosomal subunit protein uS13 (122 aa).

The interval 95–122 is disordered; it reads GLPVRGQRTHTNARTRKGPAKPIAGKKK.

It belongs to the universal ribosomal protein uS13 family. Part of the 30S ribosomal subunit. Forms a loose heterodimer with protein S19. Forms two bridges to the 50S subunit in the 70S ribosome.

In terms of biological role, located at the top of the head of the 30S subunit, it contacts several helices of the 16S rRNA. In the 70S ribosome it contacts the 23S rRNA (bridge B1a) and protein L5 of the 50S subunit (bridge B1b), connecting the 2 subunits; these bridges are implicated in subunit movement. Contacts the tRNAs in the A and P-sites. This is Small ribosomal subunit protein uS13 from Caulobacter vibrioides (strain ATCC 19089 / CIP 103742 / CB 15) (Caulobacter crescentus).